A 275-amino-acid polypeptide reads, in one-letter code: Replication protein A 32 kDa subunit (275 aa).

A disordered region spans residues 23–47; it reads MQSPGGFGSPAPTQGEKKSRSRSQQ. A DNA-binding region (OB) is located at residues 76–150; it reads VTIVGIVRHA…KSVVAFKIAP (75 aa).

This sequence belongs to the replication factor A protein 2 family. Component of the replication protein A complex (RPA/RP-A), a heterotrimeric complex composed of RPA1, RPA2 and RPA3. Post-translationally, differentially phosphorylated throughout the cell cycle, becoming phosphorylated at the G1-S transition and dephosphorylated in late mitosis. Phosphorylation increases upon replication fork stalling.

Its subcellular location is the nucleus. It is found in the PML body. Functionally, as part of the heterotrimeric replication protein A complex (RPA/RP-A), binds and stabilizes single-stranded DNA intermediates, that form during DNA replication or upon DNA stress. It prevents their reannealing and in parallel, recruits and activates different proteins and complexes involved in DNA metabolism. Thereby, it plays an essential role both in DNA replication and the cellular response to DNA damage. This Xenopus tropicalis (Western clawed frog) protein is Replication protein A 32 kDa subunit (rpa2).